The primary structure comprises 338 residues: Ketol-acid reductoisomerase (NADP(+)) (338 aa).

The region spanning 1–181 is the KARI N-terminal Rossmann domain; it reads MHVYYDKDCD…GGGRTGIIET (181 aa). Residues 24 to 27, Arg-47, Ser-50, Thr-52, and 82 to 85 each bind NADP(+); these read YGSQ and DEFQ. His-107 is an active-site residue. Gly-133 is an NADP(+) binding site. Residues 182 to 327 enclose the KARI C-terminal knotted domain; the sequence is TFKDETETDL…AKLRAMMPWI (146 aa). The Mg(2+) site is built by Asp-190, Glu-194, Glu-226, and Glu-230. Ser-251 serves as a coordination point for substrate.

Belongs to the ketol-acid reductoisomerase family. Requires Mg(2+) as cofactor.

The catalysed reaction is (2R)-2,3-dihydroxy-3-methylbutanoate + NADP(+) = (2S)-2-acetolactate + NADPH + H(+). It carries out the reaction (2R,3R)-2,3-dihydroxy-3-methylpentanoate + NADP(+) = (S)-2-ethyl-2-hydroxy-3-oxobutanoate + NADPH + H(+). The protein operates within amino-acid biosynthesis; L-isoleucine biosynthesis; L-isoleucine from 2-oxobutanoate: step 2/4. It functions in the pathway amino-acid biosynthesis; L-valine biosynthesis; L-valine from pyruvate: step 2/4. Functionally, involved in the biosynthesis of branched-chain amino acids (BCAA). Catalyzes an alkyl-migration followed by a ketol-acid reduction of (S)-2-acetolactate (S2AL) to yield (R)-2,3-dihydroxy-isovalerate. In the isomerase reaction, S2AL is rearranged via a Mg-dependent methyl migration to produce 3-hydroxy-3-methyl-2-ketobutyrate (HMKB). In the reductase reaction, this 2-ketoacid undergoes a metal-dependent reduction by NADPH to yield (R)-2,3-dihydroxy-isovalerate. This is Ketol-acid reductoisomerase (NADP(+)) from Cellvibrio japonicus (strain Ueda107) (Pseudomonas fluorescens subsp. cellulosa).